The following is a 126-amino-acid chain: Probable V-type proton ATPase subunit G (126 aa).

The interval 23-45 (NEARKRKLQRTKQAKQEAQAEVE) is disordered. Positions 26–35 (RKRKLQRTKQ) are enriched in basic residues.

This sequence belongs to the V-ATPase G subunit family. In terms of assembly, V-ATPase is a heteromultimeric enzyme made up of two complexes: the ATP-hydrolytic V1 complex and the proton translocation V0 complex. The V1 complex consists of three catalytic AB heterodimers that form a heterohexamer, three peripheral stalks each consisting of EG heterodimers, one central rotor including subunits D and F, and the regulatory subunits C and H. The proton translocation complex V0 consists of the proton transport subunit a, a ring of proteolipid subunits c9c'', rotary subunit d, subunits e and f, and the accessory subunits vah-19/Ac45 and vah-20/PRR.

Subunit of the V1 complex of vacuolar(H+)-ATPase (V-ATPase), a multisubunit enzyme composed of a peripheral complex (V1) that hydrolyzes ATP and a membrane integral complex (V0) that translocates protons. V-ATPase is responsible for acidifying and maintaining the pH of intracellular compartments and in some cell types, is targeted to the plasma membrane, where it is responsible for acidifying the extracellular environment. In neurons, required for necrotic cell death by promoting intracellular acidification. The polypeptide is Probable V-type proton ATPase subunit G (Caenorhabditis briggsae).